The following is a 421-amino-acid chain: Histidine--tRNA ligase (421 aa).

It belongs to the class-II aminoacyl-tRNA synthetase family. Homodimer.

Its subcellular location is the cytoplasm. It catalyses the reaction tRNA(His) + L-histidine + ATP = L-histidyl-tRNA(His) + AMP + diphosphate + H(+). This chain is Histidine--tRNA ligase, found in Natranaerobius thermophilus (strain ATCC BAA-1301 / DSM 18059 / JW/NM-WN-LF).